The primary structure comprises 206 residues: Uridine kinase (206 aa).

Residue 11-18 coordinates ATP; the sequence is GGTGSGKS.

The protein belongs to the uridine kinase family.

The protein resides in the cytoplasm. The enzyme catalyses uridine + ATP = UMP + ADP + H(+). It carries out the reaction cytidine + ATP = CMP + ADP + H(+). Its pathway is pyrimidine metabolism; CTP biosynthesis via salvage pathway; CTP from cytidine: step 1/3. The protein operates within pyrimidine metabolism; UMP biosynthesis via salvage pathway; UMP from uridine: step 1/1. This chain is Uridine kinase, found in Clostridium botulinum (strain 657 / Type Ba4).